A 148-amino-acid chain; its full sequence is MFEGAAALNLDAKGRLAIPARHRDALLAASEGSLVLTAHPHRCLLLYPSPAWQPIRDQILKASSLDPRAASIKRVLVGNARTEEPDSAGRILIAPELREYAKFEKTVYLVGMGTHFEIWSEAGWKQQNDLAAEALSGDLPPGFGDLVL.

SpoVT-AbrB domains follow at residues 5–51 (AAAL…PSPA) and 80–123 (ARTE…SEAG).

The protein belongs to the MraZ family. As to quaternary structure, forms oligomers.

The protein resides in the cytoplasm. It is found in the nucleoid. This chain is Transcriptional regulator MraZ, found in Dechloromonas aromatica (strain RCB).